Reading from the N-terminus, the 190-residue chain is Threonylcarbamoyl-AMP synthase (190 aa).

Residues 7-190 (GDAIAAAIDV…ALTGELFRQG (184 aa)) enclose the YrdC-like domain.

Belongs to the SUA5 family. TsaC subfamily.

The protein localises to the cytoplasm. The catalysed reaction is L-threonine + hydrogencarbonate + ATP = L-threonylcarbamoyladenylate + diphosphate + H2O. Its function is as follows. Required for the formation of a threonylcarbamoyl group on adenosine at position 37 (t(6)A37) in tRNAs that read codons beginning with adenine. Catalyzes the conversion of L-threonine, HCO(3)(-)/CO(2) and ATP to give threonylcarbamoyl-AMP (TC-AMP) as the acyladenylate intermediate, with the release of diphosphate. This Shigella flexneri protein is Threonylcarbamoyl-AMP synthase.